The following is a 455-amino-acid chain: Glutamyl-tRNA reductase (455 aa).

Substrate-binding positions include 49 to 52 (TCNR), Ser109, 114 to 116 (ETQ), and Gln120. The active-site Nucleophile is Cys50. 189–194 (GAGKMG) is an NADP(+) binding site.

This sequence belongs to the glutamyl-tRNA reductase family. Homodimer.

The catalysed reaction is (S)-4-amino-5-oxopentanoate + tRNA(Glu) + NADP(+) = L-glutamyl-tRNA(Glu) + NADPH + H(+). Its pathway is porphyrin-containing compound metabolism; protoporphyrin-IX biosynthesis; 5-aminolevulinate from L-glutamyl-tRNA(Glu): step 1/2. Its function is as follows. Catalyzes the NADPH-dependent reduction of glutamyl-tRNA(Glu) to glutamate 1-semialdehyde (GSA). This Bacillus velezensis (strain DSM 23117 / BGSC 10A6 / LMG 26770 / FZB42) (Bacillus amyloliquefaciens subsp. plantarum) protein is Glutamyl-tRNA reductase.